The primary structure comprises 347 residues: Histone deacetylase 11 (347 aa).

The interval 14–326 (TRWPIVYSPR…LNLFGLGLIG (313 aa)) is histone deacetylase. H143 is an active-site residue.

Belongs to the histone deacetylase family. In terms of assembly, interacts with HDAC6. As to expression, weakly expressed in most tissues. Strongly expressed in brain, heart, skeletal muscle, kidney and testis.

The protein resides in the nucleus. It carries out the reaction N(6)-acetyl-L-lysyl-[histone] + H2O = L-lysyl-[histone] + acetate. Functionally, responsible for the deacetylation of lysine residues on the N-terminal part of the core histones (H2A, H2B, H3 and H4). Histone deacetylation gives a tag for epigenetic repression and plays an important role in transcriptional regulation, cell cycle progression and developmental events. Histone deacetylases act via the formation of large multiprotein complexes. In Homo sapiens (Human), this protein is Histone deacetylase 11 (HDAC11).